A 425-amino-acid polypeptide reads, in one-letter code: Histidine--tRNA ligase (425 aa).

This sequence belongs to the class-II aminoacyl-tRNA synthetase family. Homodimer.

Its subcellular location is the cytoplasm. It catalyses the reaction tRNA(His) + L-histidine + ATP = L-histidyl-tRNA(His) + AMP + diphosphate + H(+). The protein is Histidine--tRNA ligase of Streptococcus uberis (strain ATCC BAA-854 / 0140J).